A 74-amino-acid chain; its full sequence is Small ribosomal subunit protein bS18 (74 aa).

Belongs to the bacterial ribosomal protein bS18 family. In terms of assembly, part of the 30S ribosomal subunit. Forms a tight heterodimer with protein bS6.

In terms of biological role, binds as a heterodimer with protein bS6 to the central domain of the 16S rRNA, where it helps stabilize the platform of the 30S subunit. The sequence is that of Small ribosomal subunit protein bS18 from Gloeobacter violaceus (strain ATCC 29082 / PCC 7421).